The chain runs to 571 residues: Origin recognition complex subunit 5 (571 aa).

Disordered regions lie at residues 90–142 and 404–430; these read DDEY…YDDD and QIYPPQQVPQQQKQQEKEKEKEKGRQL. Low complexity-rich tracts occupy residues 107–133 and 407–416; these read NNNNNNNNNNNNNNNNNNNNNNNNNND and PPQQVPQQQK. The segment covering 417 to 428 has biased composition (basic and acidic residues); it reads QQEKEKEKEKGR.

This sequence belongs to the ORC1 family. ORC is composed of six subunits.

Its subcellular location is the nucleus. In terms of biological role, component of the origin recognition complex (ORC) that binds origins of replication. DNA-binding is ATP-dependent, however specific DNA sequences that define origins of replication have not been identified so far. ORC is required to assemble the pre-replication complex necessary to initiate DNA replication. This chain is Origin recognition complex subunit 5 (orcE), found in Dictyostelium discoideum (Social amoeba).